A 155-amino-acid polypeptide reads, in one-letter code: 6,7-dimethyl-8-ribityllumazine synthase (155 aa).

5-amino-6-(D-ribitylamino)uracil is bound by residues Phe-22, 56 to 58 (AFE), and 80 to 82 (AVI). Residue 85–86 (ST) participates in (2S)-2-hydroxy-3-oxobutyl phosphate binding. The active-site Proton donor is His-88. Position 113 (Phe-113) interacts with 5-amino-6-(D-ribitylamino)uracil. Arg-127 is a (2S)-2-hydroxy-3-oxobutyl phosphate binding site.

The protein belongs to the DMRL synthase family.

It catalyses the reaction (2S)-2-hydroxy-3-oxobutyl phosphate + 5-amino-6-(D-ribitylamino)uracil = 6,7-dimethyl-8-(1-D-ribityl)lumazine + phosphate + 2 H2O + H(+). The protein operates within cofactor biosynthesis; riboflavin biosynthesis; riboflavin from 2-hydroxy-3-oxobutyl phosphate and 5-amino-6-(D-ribitylamino)uracil: step 1/2. Functionally, catalyzes the formation of 6,7-dimethyl-8-ribityllumazine by condensation of 5-amino-6-(D-ribitylamino)uracil with 3,4-dihydroxy-2-butanone 4-phosphate. This is the penultimate step in the biosynthesis of riboflavin. This is 6,7-dimethyl-8-ribityllumazine synthase from Bifidobacterium longum subsp. infantis (strain ATCC 15697 / DSM 20088 / JCM 1222 / NCTC 11817 / S12).